We begin with the raw amino-acid sequence, 493 residues long: Glutamate--tRNA ligase (493 aa).

The short motif at 10-20 (PSPTGDPHVGT) is the 'HIGH' region element. Zn(2+) contacts are provided by C107, C109, C134, and H136. The short motif at 251-255 (KLSKR) is the 'KMSKS' region element. K254 lines the ATP pocket.

The protein belongs to the class-I aminoacyl-tRNA synthetase family. Glutamate--tRNA ligase type 1 subfamily. In terms of assembly, monomer. Zn(2+) is required as a cofactor.

Its subcellular location is the cytoplasm. The enzyme catalyses tRNA(Glu) + L-glutamate + ATP = L-glutamyl-tRNA(Glu) + AMP + diphosphate. Functionally, catalyzes the attachment of glutamate to tRNA(Glu) in a two-step reaction: glutamate is first activated by ATP to form Glu-AMP and then transferred to the acceptor end of tRNA(Glu). In Ectopseudomonas mendocina (strain ymp) (Pseudomonas mendocina), this protein is Glutamate--tRNA ligase.